A 273-amino-acid chain; its full sequence is Putative cysteine-rich repeat secretory protein 40 (273 aa).

An N-terminal signal peptide occupies residues 1-32 (MYPSCSLLQRLVWFPFLALVATQLLFIRNVSS). Gnk2-homologous domains lie at 39 to 141 (YLHH…SISV) and 151 to 264 (YENN…LYPF).

This sequence belongs to the cysteine-rich repeat secretory protein family.

The protein localises to the secreted. The sequence is that of Putative cysteine-rich repeat secretory protein 40 (CRRSP40) from Arabidopsis thaliana (Mouse-ear cress).